The following is an 88-amino-acid chain: UPF0250 protein Sfri_0694 (88 aa).

Belongs to the UPF0250 family.

This Shewanella frigidimarina (strain NCIMB 400) protein is UPF0250 protein Sfri_0694.